Reading from the N-terminus, the 834-residue chain is Transcription intermediary factor 1-beta (834 aa).

At alanine 2 the chain carries N-acetylalanine. Residues 13–23 show a composition bias toward low complexity; that stretch reads AATAASAASGS. Residues 13–56 form a disordered region; that stretch reads AATAASAASGSPGSGEGSAGGEKRPAASSAAAASAAASSPAGGG. 3 positions are modified to phosphoserine: serine 23, serine 26, and serine 30. Residue lysine 35 forms a Glycyl lysine isopeptide (Lys-Gly) (interchain with G-Cter in SUMO2) linkage. The segment covering 38 to 52 has biased composition (low complexity); that stretch reads AASSAAAASAAASSP. Serine 51 is modified (phosphoserine). The RING-type zinc finger occupies 66–122; sequence CGVCRERLRPERDPRLLPCLHSACSACLGPATPAAANNSGDGGSAGDGAMVDCPVCK. A Glycyl lysine isopeptide (Lys-Gly) (interchain with G-Cter in SUMO2) cross-link involves residue lysine 128. Serine 139 carries the post-translational modification Phosphoserine. Residues 149–196 form a B box-type 1 zinc finger; it reads DANQCCTSCEDNAPATSYCVECSEPLCETCVEAHQRVKYTKDHTVRST. 4 residues coordinate Zn(2+): cysteine 154, cysteine 157, cysteine 178, and histidine 182. Lysine 200 participates in a covalent cross-link: Glycyl lysine isopeptide (Lys-Gly) (interchain with G-Cter in SUMO2). The B box-type 2 zinc finger occupies 205 to 246; it reads ERTVYCNVHKHEPLVLFCESCDTLTCRDCQLNAHKDHQYQFL. 4 residues coordinate Zn(2+): cysteine 210, histidine 213, cysteine 233, and histidine 238. The segment at 247-377 is leucine zipper alpha helical coiled-coil region; that stretch reads EDAVRNQRKL…LIYFQLHRAL (131 aa). An interaction with MAGEC2 region spans residues 248–377; that stretch reads DAVRNQRKLL…LIYFQLHRAL (130 aa). Residues lysine 255 and lysine 262 each participate in a glycyl lysine isopeptide (Lys-Gly) (interchain with G-Cter in SUMO2) cross-link. Position 267 is an N6-acetyllysine (lysine 267). Lysine 273 participates in a covalent cross-link: Glycyl lysine isopeptide (Lys-Gly) (interchain with G-Cter in SUMO2). Lysine 305 is modified (N6-acetyllysine; alternate). A Glycyl lysine isopeptide (Lys-Gly) (interchain with G-Cter in SUMO2); alternate cross-link involves residue lysine 305. A Glycyl lysine isopeptide (Lys-Gly) (interchain with G-Cter in SUMO2) cross-link involves residue lysine 320. At lysine 341 the chain carries N6-acetyllysine. Residue lysine 367 forms a Glycyl lysine isopeptide (Lys-Gly) (interchain with G-Cter in SUMO2) linkage. Positions 367 to 371 are involved in binding PPP1CA; that stretch reads KLIYF. Lysine 378 is subject to N6-acetyllysine; alternate. Lysine 378 participates in a covalent cross-link: Glycyl lysine isopeptide (Lys-Gly) (interchain with G-Cter in SUMO2); alternate. Lysine 378 is covalently cross-linked (Glycyl lysine isopeptide (Lys-Gly) (interchain with G-Cter in SUMO1); alternate). A Glycyl lysine isopeptide (Lys-Gly) (interchain with G-Cter in SUMO2) cross-link involves residue lysine 408. Residues 412-480 are disordered; sequence ERPGTNSTGP…SRSGEGEVSG (69 aa). Serine 418 is modified (phosphoserine). Lysine 435 is covalently cross-linked (Glycyl lysine isopeptide (Lys-Gly) (interchain with G-Cter in SUMO2)). Polar residues predominate over residues 435-444; that stretch reads KQGSGSSQPM. A phosphoserine mark is found at serine 438, serine 440, and serine 454. Lysine 469 is covalently cross-linked (Glycyl lysine isopeptide (Lys-Gly) (interchain with G-Cter in SUMO2); alternate). Lysine 469 is covalently cross-linked (Glycyl lysine isopeptide (Lys-Gly) (interchain with G-Cter in SUMO1); alternate). Arginine 470 carries the citrulline modification. Phosphoserine is present on serine 471. Arginine 472 is subject to Citrulline. Phosphoserine is present on residues serine 473, serine 479, and serine 489. The interval 476–513 is HP1 box; it reads GEVSGLLRKVPRVSLERLDLDLTSDSQPPVFKVFPGST. The short motif at 481–494 is the PxVxL motif element; sequence LLRKVPRVSLERLD. Threonine 498 carries the phosphothreonine modification. Phosphoserine is present on serine 501. A Glycyl lysine isopeptide (Lys-Gly) (interchain with G-Cter in SUMO2) cross-link involves residue lysine 507. A Glycyl lysine isopeptide (Lys-Gly) (interchain with G-Cter in SUMO2); alternate cross-link involves residue lysine 554. Lysine 554 is covalently cross-linked (Glycyl lysine isopeptide (Lys-Gly) (interchain with G-Cter in SUMO); alternate). Residue lysine 575 forms a Glycyl lysine isopeptide (Lys-Gly) (interchain with G-Cter in SUMO2) linkage. Residues 581–602 are disordered; it reads LTEGPGAEGPRLASPSGSTSSG. Serine 594 is subject to Phosphoserine. The segment at 625–672 adopts a PHD-type zinc-finger fold; sequence ATICRVCQKPGDLVMCNQCEFCFHLDCHLPALQDVPGEEWSCSLCHVL. Lysine 676 is covalently cross-linked (Glycyl lysine isopeptide (Lys-Gly) (interchain with G-Cter in SUMO)). Serine 683, serine 689, and serine 697 each carry phosphoserine. The 105-residue stretch at 695–799 folds into the Bromo domain; it reads KLSPANQRKC…RFFETRMNDA (105 aa). Lysine 750 participates in a covalent cross-link: Glycyl lysine isopeptide (Lys-Gly) (interchain with G-Cter in SUMO2); alternate. Lysine 750 is covalently cross-linked (Glycyl lysine isopeptide (Lys-Gly) (interchain with G-Cter in SUMO1); alternate). Residue lysine 750 forms a Glycyl lysine isopeptide (Lys-Gly) (interchain with G-Cter in SUMO); alternate linkage. Phosphoserine is present on serine 752. Residue tyrosine 755 is modified to Phosphotyrosine. Serine 757 bears the Phosphoserine mark. 3 positions are modified to N6-acetyllysine; alternate: lysine 770, lysine 774, and lysine 779. Residues lysine 770, lysine 774, and lysine 779 each participate in a glycyl lysine isopeptide (Lys-Gly) (interchain with G-Cter in SUMO2); alternate cross-link. Residue lysine 779 forms a Glycyl lysine isopeptide (Lys-Gly) (interchain with G-Cter in SUMO1); alternate linkage. Serine 784 is subject to Phosphoserine. Lysine 804 is covalently cross-linked (Glycyl lysine isopeptide (Lys-Gly) (interchain with G-Cter in SUMO2)). Phosphoserine; by ATM and ATR and dsDNA kinase is present on serine 824.

This sequence belongs to the TRIM/RBCC family. Oligomer; the RBCC domain homotrimerizes and interacts with one molecule of KRAB to form the KRAB-KAP1 corepressor complex. Interacts with SETX. Binding to a KRAB domain is an absolute requirement for silencing gene expression. Interacts with a number of KRAB-ZFP proteins including ZNF10, ZFP53, ZFP68, ZNF382 and ZNF256. Interacts with NCOR1, NR3C1 and CHD3. Interacts with CEBPB (via the RING-type and PHD-type zinc fingers). Interacts with CBX5 (via the PxVxL motif); the interaction occurs in interphase nuclei and competes for binding POGZ. Interacts with POGZ; the interaction competes for interaction with CBX5. Interacts with SETDB1; the interaction is enhanced by KAP1 sumoylation, stimulates SETDB1 histone methyltransferase activity and gene silencing. Interacts (via the PHD-type zinc finger) with UBE2I; the interaction is required for sumoylation and repressor activity. Component of the TRIM28/KAP1-ERBB4-MDM2 complex involved in connecting growth factor and DNA damage responses. Interacts directly with ERBB4; the interaction represses ERBB4-mediated transcription activity. Interacts with MDM2; the interaction contributes to p53/TP53 inactivation. Component of the TRIM28/KAP1-MDM2-p53/TP53; involved in regulating p53/TP53 stabilization and activity. Interacts (via the leucine zipper alpha helical coiled-coil) with E2F1 (central region); the interaction inhibits E2F1 acetylation and transcriptional activity. Interacts with PPP1CA; the interaction dephosphorylates TRIM28 at Ser-824 and forms a complex at the p21 promoter site. Interacts with PPP1CB; the interaction is weak but is increased on dephosphorylation at Ser-824. Interacts with CEBPB and NR3C1. Interacts with CBX5 (via the PxVxL motif); the interaction occurs in interphase nuclei and competes for binding POGZ. Component of a ternary complex that includes TRIM28, a HP1 protein (CBX1, CBX3 OR CBX5), a KRAB domain-containing protein, and DNA. Interacts with SMARCAD1. Interacts with, and sumoylates IRF7. Interacts with MAGEC2. Part of a complex composed of TRIM28, HDAC1, HDAC2 and EHMT2. Interacts (via the RBCC domain) with KOX1 (via the KRAB domain), ZNF268 (via the KRAB domain) and ZNF300 (via the KRAB domain); the interactions increase KOX1, ZNF268 and ZNF300 nuclear localization activities. Interacts with AICDA. The large PER complex involved in the histone methylation is composed of at least PER2, CBX3, TRIM28, SUV39H1 and/or SUV39H2; CBX3 mediates the formation of the complex. Interacts with NR4A3; the interactions potentiates NR4A3 activity on NurRE promoter. Interacts (unphosphorylated or phosphorylated form) with ZBTB1 (via BTB domain). Probably part of a corepressor complex containing ZNF304, TRIM28, SETDB1 and DNMT1. Interacts with ATRX. Forms a complex with ATRX, SETDB1 and ZNF274. Interacts with ZFP568; the interaction mediates ZFP568 transcriptional repression activity. Interacts with RRP1B. Interacts with CRY1. Interacts with ZNF263; recruited to the SIX3 promoter along with other proteins involved in chromatin modification and transcriptional corepression where it contributes to transcriptional repression. Interacts with CYREN (via XLF motif). Interacts with TRIM17; this interaction prevents TRIM28 activity. Interacts with ZNF746. Interacts with PHF13. Interacts with ZNF354C. Interacts with ZNF432; the interaction is independent of PARP1. ATM-induced phosphorylation on Ser-824 represses sumoylation leading to the de-repression of expression of a subset of genes involved in cell cycle control and apoptosis in response to genotoxic stress. Dephosphorylation by the phosphatases, PPP1CA and PP1CB forms, allows sumoylation and expression of TRIM28 target genes. In terms of processing, sumoylation/desumoylation events regulate TRIM28-mediated transcriptional repression. Sumoylation is required for interaction with CHD3 and SETDB1 and the corepressor activity. Represses and is repressed by Ser-824 phosphorylation. Enhances the TRIM28 corepressor activity, inhibiting transcriptional activity of a number of genes including GADD45A and CDKN1A/p21. Lys-554, Lys-779 and Lys-804 are the major sites of sumoylation. In response to Dox-induced DNA damage, enhanced phosphorylation on Ser-824 prevents sumoylation and allows de-repression of CDKN1A/p21. Post-translationally, auto-ubiquitinated; enhanced by MAGEA2 and MAGEC2. Citrullinated by PADI4. In terms of processing, ADP-ribosylated by SIRT6, promoting TRIM28/KAP1 interaction with CBX5, thereby contributing to the packaging of LINE-1 retrotransposon elements into transcriptionally repressive heterochromatin.

The protein resides in the nucleus. The enzyme catalyses S-ubiquitinyl-[E2 ubiquitin-conjugating enzyme]-L-cysteine + [acceptor protein]-L-lysine = [E2 ubiquitin-conjugating enzyme]-L-cysteine + N(6)-ubiquitinyl-[acceptor protein]-L-lysine.. The protein operates within protein modification; protein sumoylation. Its function is as follows. Nuclear corepressor for KRAB domain-containing zinc finger proteins (KRAB-ZFPs). Mediates gene silencing by recruiting CHD3, a subunit of the nucleosome remodeling and deacetylation (NuRD) complex, and SETDB1 (which specifically methylates histone H3 at 'Lys-9' (H3K9me)) to the promoter regions of KRAB target genes. Enhances transcriptional repression by coordinating the increase in H3K9me, the decrease in histone H3 'Lys-9 and 'Lys-14' acetylation (H3K9ac and H3K14ac, respectively) and the disposition of HP1 proteins to silence gene expression. Recruitment of SETDB1 induces heterochromatinization. May play a role as a coactivator for CEBPB and NR3C1 in the transcriptional activation of ORM1. Also a corepressor for ERBB4. Inhibits E2F1 activity by stimulating E2F1-HDAC1 complex formation and inhibiting E2F1 acetylation. May serve as a partial backup to prevent E2F1-mediated apoptosis in the absence of RB1. Important regulator of CDKN1A/p21(CIP1). Has E3 SUMO-protein ligase activity toward itself via its PHD-type zinc finger. Specifically sumoylates IRF7, thereby inhibiting its transactivation activity. Ubiquitinates p53/TP53 leading to its proteasomal degradation; the function is enhanced by MAGEC2 and MAGEA2, and possibly MAGEA3 and MAGEA6. Mediates the nuclear localization of KOX1, ZNF268 and ZNF300 transcription factors. Probably forms a corepressor complex required for activated KRAS-mediated promoter hypermethylation and transcriptional silencing of tumor suppressor genes (TSGs) or other tumor-related genes in colorectal cancer (CRC) cells. Required to maintain a transcriptionally repressive state of genes in undifferentiated embryonic stem cells (ESCs). In ESCs, in collaboration with SETDB1, is also required for H3K9me3 and silencing of endogenous and introduced retroviruses in a DNA-methylation independent-pathway. Associates at promoter regions of tumor suppressor genes (TSGs) leading to their gene silencing. The SETDB1-TRIM28-ZNF274 complex may play a role in recruiting ATRX to the 3'-exons of zinc-finger coding genes with atypical chromatin signatures to establish or maintain/protect H3K9me3 at these transcriptionally active regions. Acts as a corepressor for ZFP568. The chain is Transcription intermediary factor 1-beta from Mus musculus (Mouse).